A 914-amino-acid polypeptide reads, in one-letter code: Chlorate reductase subunit alpha (914 aa).

Positions 1-32 (MNSPDEHNGRRRFLQFSAAALASAAASPSLWA) form a signal peptide, tat-type signal. In terms of domain architecture, 4Fe-4S Mo/W bis-MGD-type spans 62–125 (DSVGVMTHSN…VYCSWSKQPD (64 aa)). Positions 69, 73, 77, and 111 each coordinate [4Fe-4S] cluster. Aspartate 205 lines the Mo-bis(molybdopterin guanine dinucleotide) pocket.

Belongs to the prokaryotic molybdopterin-containing oxidoreductase family. In terms of assembly, heterotrimer of alpha, beta and gamma subunits. Requires [4Fe-4S] cluster as cofactor. Mo-bis(molybdopterin guanine dinucleotide) is required as a cofactor. Predicted to be exported by the Tat system. The position of the signal peptide cleavage has not been experimentally proven.

The protein resides in the periplasm. It catalyses the reaction chlorate + AH2 = chlorite + A + H2O. Its function is as follows. Terminal reductase that allows anaerobic growth on chlorate as the sole respiratory oxidant. The polypeptide is Chlorate reductase subunit alpha (clrA) (Ideonella dechloratans).